The primary structure comprises 291 residues: Nucleotide-binding protein Lm4b_02443 (291 aa).

13-20 lines the ATP pocket; that stretch reads GMSGAGKT. 63-66 is a binding site for GTP; sequence DLRG.

The protein belongs to the RapZ-like family.

Functionally, displays ATPase and GTPase activities. The protein is Nucleotide-binding protein Lm4b_02443 of Listeria monocytogenes serotype 4b (strain CLIP80459).